Consider the following 264-residue polypeptide: Zinc transporter ZupT (264 aa).

Helical transmembrane passes span 8–28, 36–56, 75–95, 121–141, and 148–168; these read AFIL…IAFV, FLSV…MIEI, WLTV…DKLI, GLMT…ATFI, and SIAI…GIAV. The Fe(2+) site is built by asparagine 132 and glutamate 135. The Zn(2+) site is built by glutamate 135 and histidine 160. Residues asparagine 161, glutamate 164, and glutamate 193 each contribute to the Fe(2+) site. Residue glutamate 164 coordinates Zn(2+). The next 3 membrane-spanning stretches (helical) occupy residues 197–217, 219–239, and 244–264; these read AIIG…GAIF, AVAG…AEEY, and LAIY…LLFI.

Belongs to the ZIP transporter (TC 2.A.5) family. ZupT subfamily.

It is found in the cell membrane. It carries out the reaction Zn(2+)(in) = Zn(2+)(out). Functionally, mediates zinc uptake. May also transport other divalent cations. This is Zinc transporter ZupT from Streptococcus mutans serotype c (strain ATCC 700610 / UA159).